A 560-amino-acid chain; its full sequence is Long-chain-fatty-acid--CoA ligase (560 aa).

It belongs to the ATP-dependent AMP-binding enzyme family.

It carries out the reaction a long-chain fatty acid + ATP + CoA = a long-chain fatty acyl-CoA + AMP + diphosphate. The protein is Long-chain-fatty-acid--CoA ligase (lcfA) of Bacillus subtilis (strain 168).